Reading from the N-terminus, the 310-residue chain is 4-hydroxythreonine-4-phosphate dehydrogenase (310 aa).

Positions 126 and 127 each coordinate substrate. A divalent metal cation-binding residues include His156, His195, and His251. Residues Lys259, Asn268, and Arg277 each contribute to the substrate site.

It belongs to the PdxA family. Homodimer. The cofactor is Zn(2+). Mg(2+) serves as cofactor. Requires Co(2+) as cofactor.

Its subcellular location is the cytoplasm. It carries out the reaction 4-(phosphooxy)-L-threonine + NAD(+) = 3-amino-2-oxopropyl phosphate + CO2 + NADH. The protein operates within cofactor biosynthesis; pyridoxine 5'-phosphate biosynthesis; pyridoxine 5'-phosphate from D-erythrose 4-phosphate: step 4/5. Its function is as follows. Catalyzes the NAD(P)-dependent oxidation of 4-(phosphooxy)-L-threonine (HTP) into 2-amino-3-oxo-4-(phosphooxy)butyric acid which spontaneously decarboxylates to form 3-amino-2-oxopropyl phosphate (AHAP). This chain is 4-hydroxythreonine-4-phosphate dehydrogenase, found in Helicobacter acinonychis (strain Sheeba).